The following is a 435-amino-acid chain: Protein translocase subunit SecY (435 aa).

Transmembrane regions (helical) follow at residues 19 to 39 (ILFT…TVPG), 68 to 88 (FSVF…VQLL), 116 to 136 (YIAL…FDTL), 147 to 167 (VQTY…VTWL), 179 to 199 (GVSM…IKGI), 216 to 236 (FIFV…TTFV), 269 to 289 (VIPV…FQVV), 311 to 331 (ISGM…YTFV), 372 to 392 (VGSL…DVFG), and 395 to 415 (DAVA…IEGM).

Belongs to the SecY/SEC61-alpha family. In terms of assembly, component of the Sec protein translocase complex. Heterotrimer consisting of SecY, SecE and SecG subunits. The heterotrimers can form oligomers, although 1 heterotrimer is thought to be able to translocate proteins. Interacts with the ribosome. Interacts with SecDF, and other proteins may be involved. Interacts with SecA.

The protein localises to the cell membrane. Its function is as follows. The central subunit of the protein translocation channel SecYEG. Consists of two halves formed by TMs 1-5 and 6-10. These two domains form a lateral gate at the front which open onto the bilayer between TMs 2 and 7, and are clamped together by SecE at the back. The channel is closed by both a pore ring composed of hydrophobic SecY resides and a short helix (helix 2A) on the extracellular side of the membrane which forms a plug. The plug probably moves laterally to allow the channel to open. The ring and the pore may move independently. This is Protein translocase subunit SecY from Streptococcus sanguinis (strain SK36).